An 816-amino-acid chain; its full sequence is Two pore channel protein 1 (816 aa).

The Cytoplasmic portion of the chain corresponds to 1 to 112 (MAVSLDDDVP…AHNHLFYLME (112 aa)). The tract at residues 17–64 (EGGSAPLAPSNGLGQEELPSKNGGSYAIHDSQAPSLSSGGESSPSSPA) is disordered. Positions 50–63 (PSLSSGGESSPSSP) are enriched in low complexity. The chain crosses the membrane as a helical span at residues 113 to 133 (LATALLLLLLSLCEAPAVPAL). Residue Arg-134 is a topological domain, extracellular. Residues 135-155 (LGIYVHATLELFALMVVVFEL) form a helical membrane-spanning segment. Residues 156–177 (CMKLRWLGLHTFIRHKRTMVKT) lie on the Cytoplasmic side of the membrane. The helical transmembrane segment at 178–198 (SVLVVQFVEAIVVLVRQMSHV) threads the bilayer. The Extracellular portion of the chain corresponds to 199–200 (RV). The chain crosses the membrane as a helical span at residues 201–220 (TRALRCIFLVDCRYCGGVRR). Topologically, residues 221-234 (NLRQIFQSLPPFMD) are cytoplasmic. A helical membrane pass occupies residues 235-255 (ILLLLLFFMIIFAILGFYLFS). The Extracellular portion of the chain corresponds to 256 to 262 (PNPSDPY). Residues 263 to 286 (FSTLENSIVSLFVLLTTANFPDVM) constitute an intramembrane region (helical; Pore-forming). The Extracellular portion of the chain corresponds to 287–294 (MPSYSRNP). The chain crosses the membrane as a helical span at residues 295–315 (WSCVFFIVYLSIELYFIMNLL). The Cytoplasmic segment spans residues 316–444 (LAVVFDTFND…NILVKSKAFQ (129 aa)). The chain crosses the membrane as a helical span at residues 445-465 (YFMYLVVAVNGVWILVETFML). Topologically, residues 466-479 (KGGNFFSKHVPWSY) are extracellular. Residues 480–500 (LVFLTIYGVELFLKVAGLGPV) traverse the membrane as a helical segment. Over 501-503 (EYL) the chain is Cytoplasmic. The helical transmembrane segment at 504–526 (SSGWNLFDFSVTVFAFLGLLALA) threads the bilayer. The Extracellular segment spans residues 527–534 (LNMEPFYF). Residues 535-549 (IVVLRPLQLLRLFKL) form a helical membrane-spanning segment. At 550 to 573 (KERYRNVLDTMFELLPRMASLGLT) the chain is on the cytoplasmic side. A helical transmembrane segment spans residues 574–594 (LLIFYYSFAIVGMEFFCGIVF). Over 595–629 (PNCCNTSTVADAYRWRNHTVGNRTVVEEGYYYLNN) the chain is Extracellular. 3 N-linked (GlcNAc...) asparagine glycosylation sites follow: Asn-599, Asn-611, and Asn-616. Positions 630–653 (FDNILNSFVTLFELTVVNNWYIIM) form an intramembrane region, helical; Pore-forming. Residues 654 to 670 (EGVTSQTSHWSRLYFMT) are Extracellular-facing. A helical membrane pass occupies residues 671–691 (FYIVTMVVMTIIVAFILEAFV). The Cytoplasmic segment spans residues 692–816 (FRMNYSRKNQ…GSRQRSQTVT (125 aa)). The stretch at 769–796 (SLKMYQEEIQEWYEEHAREQEQQRQLSS) forms a coiled coil. Positions 782-816 (EEHAREQEQQRQLSSSAAPAAQQPPGSRQRSQTVT) are disordered. Over residues 791–816 (QRQLSSSAAPAAQQPPGSRQRSQTVT) the composition is skewed to low complexity.

It belongs to the calcium channel alpha-1 subunit (TC 1.A.1.11) family. Two pore calcium channel subfamily. In terms of assembly, dimer. Interacts with MTOR; the interaction is required for TPCN1 ATP sensitivity. Interacts with STX7, STX8 and STX12. Interacts with JPT2. Found in a complex with LSM12, TPCN1 and TPCN2. N-glycosylated. As to expression, highest expression found in the heart and kidney, and lowest expression found in the spleen.

It localises to the lysosome membrane. The protein localises to the endosome membrane. It is found in the early endosome membrane. Its subcellular location is the recycling endosome membrane. It catalyses the reaction Na(+)(in) = Na(+)(out). The enzyme catalyses Ca(2+)(in) = Ca(2+)(out). Its activity is regulated as follows. Na(+) current is inhibited by ATP in a MTORC-dependent manner. ATP sensitivity is independent of PI(3,5)P2. Probably regulated by Mg(2+) ions, cytosolic Mg(2+) selectively inhibits outward current while lysosomal Mg(2+) modestly inhibits both the outward and inward currents. In the absence of Mg(2+), NAADP readily activates TPCN2, with properties similar to PI(3,5)P2. Both current elicited by PI(3,5)P2 as well as NAADP are inhibited by tetrandrine. In terms of biological role, intracellular channel initially characterized as a non-selective Ca(2+)-permeable channel activated by NAADP (nicotinic acid adenine dinucleotide phosphate), it is also a voltage-gated highly-selective Na(+) channel activated directly by PI(3,5)P2 (phosphatidylinositol 3,5-bisphosphate) that senses pH changes and confers electrical excitability to organelles. Localizes to the early and recycling endosomes membranes where it plays a role in the uptake and processing of proteins and regulates organellar membrane excitability, membrane trafficking and pH homeostasis. Ion selectivity is not fixed but rather agonist-dependent and under defined ionic conditions, can be readily activated by both NAADP and PI(3,5)P2. Required for mTOR-dependent nutrient sensing. (Microbial infection) During Ebola virus (EBOV) infection, controls the movement of endosomes containing virus particles and is required by EBOV to escape from the endosomal network into the cell cytoplasm. The polypeptide is Two pore channel protein 1 (Homo sapiens (Human)).